The primary structure comprises 821 residues: MELGGPATAGATDTAGQLFKDELSDKCQKLFLEFLEECKGKDGSNLYVSAAEELVRPERNTLVVNFTDIEYYNQQLATTIQEEYYRVYPHLCRAVRSFARQMGNIPANKEFYVAFSDFPARQKIRELSSAKIGTLLRISGQVVRTHPVHPELVSGTFLCMDCQSVVKDVEQQFRYTQPTICKNPVCANRRRFTLDTNKSRFVDFQKVRIQETQAELPRGAIPRSVEIILRAEAVETAMAGDRCDFTGTLIVVPDISALAAGDARMETGAKVTGGEGFNSEGVQGLKALGVRDLSYRLAFLACHVGATNPRFGGKDLREEDQTAESIKNQMTVQEWEKVFEMSQDKNLYHNLCTSLFPTIHGNDEIKRGVLLMLFGGVPKTTMEGTSLRGDINVCIVGDPSTSKSQFLKHVEEFSPRAVYTSGKASSAAGLTAAVVKDEESHEFVIEAGALMLADNGVCCIDEFDKMDLKDQVAIHEAMEQQTISITKAGVKATLNARTSILAAANPVGGRYERSKSLKHNVNLSAPIMSRFDLFFILVDECNEVTDYAIARRIVDLHARNEESIERVYSIEDIQRYLLFARQFQPKITKEAEEFIVEQYRRLRQRDGSGVAKSSWRITVRQLESLIRLSESMARMHCSDEVQPKHVKEAFRLLSKSIIRVDTPDVSFDQGEDEKNVEEEVNNANLNNGEEAMETNQDEPINDKPSTNAGLKMSFAEYKQISNLLVLHMQKMEEVEEECHLTTTDLVNWYLKEMEAEIETETELILKKRLIEKVIHRLINYDHILIELNKSELKTMDDSKETSEDAAEDRILVVNPNYMLED.

The C4-type zinc finger occupies C159–C186. The 208-residue stretch at L347–V554 folds into the MCM domain. Position 397-404 (G397–S404) interacts with ATP. Residues S529–D532 carry the Arginine finger motif.

This sequence belongs to the MCM family. As to quaternary structure, component of the mcm2-7 complex (RLF-M). The complex forms a toroidal hexameric ring with the proposed subunit order mcm2-mcm6-mcm4-mcm7-mcm3-mcm5. The heterodimer of mmcm3/mcm5 interacts with mcm4, mmcm6, mcm7 and weakly with mcm2. Component of the CMG helicase complex, composed of the mcm2-7 complex, the GINS complex and cdc45.

Its subcellular location is the nucleus. The protein localises to the chromosome. It catalyses the reaction ATP + H2O = ADP + phosphate + H(+). In terms of biological role, acts as a component of the mcm2-7 complex (mcm complex) which is the putative replicative helicase essential for 'once per cell cycle' DNA replication initiation and elongation in eukaryotic cells. The active ATPase sites in the mcm2-7 ring are formed through the interaction surfaces of two neighboring subunits such that a critical structure of a conserved arginine finger motif is provided in trans relative to the ATP-binding site of the Walker A box of the adjacent subunit. The six ATPase active sites, however, are likely to contribute differentially to the complex helicase activity. The existence of maternal and zygotic forms of mcm3 and mcm6 suggests that specific forms of mcm2-7 complexes may be used during different stages of development. The polypeptide is Maternal DNA replication licensing factor mcm6 (Xenopus tropicalis (Western clawed frog)).